Reading from the N-terminus, the 451-residue chain is DNA polymerase IV (451 aa).

In terms of domain architecture, UmuC spans 5 to 187 (VIHVDMDAFF…LPVGRLWGVG (183 aa)). Residues D9 and D104 each coordinate Mg(2+). Residue E105 is part of the active site.

Belongs to the DNA polymerase type-Y family. In terms of assembly, monomer. It depends on Mg(2+) as a cofactor.

The protein resides in the cytoplasm. The enzyme catalyses DNA(n) + a 2'-deoxyribonucleoside 5'-triphosphate = DNA(n+1) + diphosphate. In terms of biological role, poorly processive, error-prone DNA polymerase involved in untargeted mutagenesis. Copies undamaged DNA at stalled replication forks, which arise in vivo from mismatched or misaligned primer ends. These misaligned primers can be extended by PolIV. Exhibits no 3'-5' exonuclease (proofreading) activity. May be involved in translesional synthesis, in conjunction with the beta clamp from PolIII. The chain is DNA polymerase IV from Corynebacterium diphtheriae (strain ATCC 700971 / NCTC 13129 / Biotype gravis).